The following is a 126-amino-acid chain: Histone H2B type 1-H (126 aa).

Low complexity predominate over residues 1 to 12 (MPDPAKSAPAPK). Residues 1–36 (MPDPAKSAPAPKKGSKKAVTKAQKKDGKKRKRSRKE) are disordered. At proline 2 the chain carries N-acetylproline. Lysine 6 is subject to N6-(2-hydroxyisobutyryl)lysine; alternate. Position 6 is an N6-(beta-hydroxybutyryl)lysine; alternate (lysine 6). N6-acetyllysine; alternate is present on lysine 6. Lysine 6 is modified (N6-butyryllysine; alternate). Lysine 6 is modified (N6-crotonyllysine; alternate). Position 6 is an N6-lactoyllysine; alternate (lysine 6). Lysine 6 is covalently cross-linked (Glycyl lysine isopeptide (Lys-Gly) (interchain with G-Cter in SUMO2); alternate). Residue serine 7 is modified to ADP-ribosylserine. Residue lysine 12 is modified to N6-(beta-hydroxybutyryl)lysine; alternate. Residues lysine 12 and lysine 13 each carry the N6-acetyllysine; alternate modification. N6-crotonyllysine; alternate is present on residues lysine 12 and lysine 13. Lysine 12 carries the post-translational modification N6-lactoyllysine; alternate. An N6-(2-hydroxyisobutyryl)lysine; alternate modification is found at lysine 13. Phosphoserine; by STK4/MST1 is present on serine 15. An N6-acetyllysine; alternate mark is found at lysine 16, lysine 17, lysine 21, and lysine 24. 4 positions are modified to N6-crotonyllysine; alternate: lysine 16, lysine 17, lysine 21, and lysine 24. An N6-lactoyllysine; alternate mark is found at lysine 16, lysine 17, lysine 21, and lysine 24. Residues lysine 17 and lysine 21 each carry the N6-(beta-hydroxybutyryl)lysine; alternate modification. Lysine 17 bears the N6-glutaryllysine; alternate mark. N6-(2-hydroxyisobutyryl)lysine; alternate is present on residues lysine 21 and lysine 24. Lysine 21 is modified (N6-butyryllysine; alternate). Lysine 21 participates in a covalent cross-link: Glycyl lysine isopeptide (Lys-Gly) (interchain with G-Cter in SUMO2); alternate. Lysine 25 is modified (N6-(2-hydroxyisobutyryl)lysine). N6-(2-hydroxyisobutyryl)lysine; alternate is present on lysine 35. N6-(beta-hydroxybutyryl)lysine; alternate is present on lysine 35. An N6-crotonyllysine; alternate modification is found at lysine 35. Position 35 is an N6-glutaryllysine; alternate (lysine 35). N6-succinyllysine; alternate is present on lysine 35. Residue lysine 35 forms a Glycyl lysine isopeptide (Lys-Gly) (interchain with G-Cter in ubiquitin); alternate linkage. PolyADP-ribosyl glutamic acid is present on glutamate 36. Serine 37 bears the Phosphoserine; by AMPK mark. N6-(2-hydroxyisobutyryl)lysine; alternate is present on residues lysine 44, lysine 47, and lysine 58. Residue lysine 44 is modified to N6-lactoyllysine; alternate. 2 positions are modified to N6-glutaryllysine; alternate: lysine 44 and lysine 47. Residue lysine 47 is modified to N6-methyllysine; alternate. Lysine 58 bears the N6,N6-dimethyllysine; alternate mark. A Dimethylated arginine modification is found at arginine 80. The residue at position 86 (lysine 86) is an N6-(2-hydroxyisobutyryl)lysine; alternate. Lysine 86 carries the post-translational modification N6-(beta-hydroxybutyryl)lysine; alternate. N6-acetyllysine; alternate is present on lysine 86. Lysine 86 is modified (N6-lactoyllysine; alternate). Position 86 is an N6,N6,N6-trimethyllysine; alternate (lysine 86). An omega-N-methylarginine mark is found at arginine 87 and arginine 93. Lysine 109 carries the N6-(2-hydroxyisobutyryl)lysine; alternate modification. Lysine 109 is subject to N6-lactoyllysine; alternate. Lysine 109 is subject to N6-glutaryllysine; alternate. Lysine 109 is modified (N6-methyllysine; alternate). An O-linked (GlcNAc) serine glycan is attached at serine 113. The residue at position 116 (threonine 116) is a Phosphothreonine. An N6-(2-hydroxyisobutyryl)lysine; alternate mark is found at lysine 117 and lysine 121. Lysine 117 and lysine 121 each carry N6-(beta-hydroxybutyryl)lysine; alternate. Lysine 117 and lysine 121 each carry N6-lactoyllysine; alternate. An N6-glutaryllysine; alternate mark is found at lysine 117 and lysine 121. 2 positions are modified to N6-succinyllysine; alternate: lysine 117 and lysine 121. Residue lysine 117 is modified to N6-malonyllysine; alternate. N6-methylated lysine; alternate is present on lysine 117. A Glycyl lysine isopeptide (Lys-Gly) (interchain with G-Cter in ubiquitin); alternate cross-link involves residue lysine 121.

This sequence belongs to the histone H2B family. As to quaternary structure, the nucleosome is a histone octamer containing two molecules each of H2A, H2B, H3 and H4 assembled in one H3-H4 heterotetramer and two H2A-H2B heterodimers. The octamer wraps approximately 147 bp of DNA. Found in a complex with PPAR9; DTX3L AND STAT1; the interaction is likely to induce DTX3L-mediated ubiquitination of H2BC9/H2BJ. Monoubiquitination at Lys-35 (H2BK34Ub) by the MSL1/MSL2 dimer is required for histone H3 'Lys-4' (H3K4me) and 'Lys-79' (H3K79me) methylation and transcription activation at specific gene loci, such as HOXA9 and MEIS1 loci. Similarly, monoubiquitination at Lys-121 (H2BK120Ub) by the RNF20/40 complex gives a specific tag for epigenetic transcriptional activation and is also prerequisite for histone H3 'Lys-4' and 'Lys-79' methylation. It also functions cooperatively with the FACT dimer to stimulate elongation by RNA polymerase II. H2BK120Ub also acts as a regulator of mRNA splicing: deubiquitination by USP49 is required for efficient cotranscriptional splicing of a large set of exons. Monoubiquitinated by DTX3L upon encephalomyocarditis virus (EMCV)-mediated infection. In terms of processing, phosphorylation at Ser-37 (H2BS36ph) by AMPK in response to stress promotes transcription. Phosphorylated on Ser-15 (H2BS14ph) by STK4/MST1 during apoptosis; which facilitates apoptotic chromatin condensation. Also phosphorylated on Ser-15 in response to DNA double strand breaks (DSBs), and in correlation with somatic hypermutation and immunoglobulin class-switch recombination. Post-translationally, glcNAcylation at Ser-113 promotes monoubiquitination of Lys-121. It fluctuates in response to extracellular glucose, and associates with transcribed genes. ADP-ribosylated by PARP1 or PARP2 on Ser-7 (H2BS6ADPr) in response to DNA damage. H2BS6ADPr promotes recruitment of CHD1L. Poly ADP-ribosylation on Glu-36 (H2BE35ADPr) by PARP1 regulates adipogenesis: it inhibits phosphorylation at Ser-37 (H2BS36ph), thereby blocking expression of pro-adipogenetic genes. In terms of processing, crotonylation (Kcr) is specifically present in male germ cells and marks testis-specific genes in post-meiotic cells, including X-linked genes that escape sex chromosome inactivation in haploid cells. Crotonylation marks active promoters and enhancers and confers resistance to transcriptional repressors. It is also associated with post-meiotically activated genes on autosomes. Post-translationally, lactylated in macrophages by EP300/P300 by using lactoyl-CoA directly derived from endogenous or exogenous lactate, leading to stimulates gene transcription.

The protein resides in the nucleus. It localises to the chromosome. In terms of biological role, core component of nucleosome. Nucleosomes wrap and compact DNA into chromatin, limiting DNA accessibility to the cellular machineries which require DNA as a template. Histones thereby play a central role in transcription regulation, DNA repair, DNA replication and chromosomal stability. DNA accessibility is regulated via a complex set of post-translational modifications of histones, also called histone code, and nucleosome remodeling. The protein is Histone H2B type 1-H of Homo sapiens (Human).